A 320-amino-acid chain; its full sequence is Bifunctional phosphoglucose/phosphomannose isomerase (320 aa).

The SIS domain occupies 20-153 (IAKDLTPYKG…NLLGVDKDEL (134 aa)). Residues glycine 37, serine 38, serine 80, serine 82, threonine 85, and arginine 132 each contribute to the D-fructose 6-phosphate site. Glutamate 204 serves as the catalytic Proton acceptor. D-fructose 6-phosphate contacts are provided by histidine 220 and lysine 313. Residue histidine 220 is the Proton donor of the active site. Catalysis depends on lysine 313, which acts as the Proton acceptor.

The protein belongs to the PGI/PMI family. In terms of assembly, homodimer.

It carries out the reaction alpha-D-glucose 6-phosphate = beta-D-fructose 6-phosphate. It catalyses the reaction D-mannose 6-phosphate = D-fructose 6-phosphate. In terms of biological role, dual specificity isomerase that catalyzes the isomerization of both glucose-6-phosphate and mannose-6-phosphate to fructose-6-phosphate. The sequence is that of Bifunctional phosphoglucose/phosphomannose isomerase from Aquifex aeolicus (strain VF5).